Here is a 361-residue protein sequence, read N- to C-terminus: Peptide chain release factor 1 (361 aa).

Glutamine 235 is modified (N5-methylglutamine). The segment at 283 to 306 (RSQQATAEAMTRKLQVGSGDRSQR) is disordered.

This sequence belongs to the prokaryotic/mitochondrial release factor family. In terms of processing, methylated by PrmC. Methylation increases the termination efficiency of RF1.

The protein resides in the cytoplasm. Functionally, peptide chain release factor 1 directs the termination of translation in response to the peptide chain termination codons UAG and UAA. The sequence is that of Peptide chain release factor 1 from Xylella fastidiosa (strain M23).